A 29-amino-acid polypeptide reads, in one-letter code: Kunitz-type trypsin inhibitor IVTI (29 aa).

The protein belongs to the protease inhibitor I3 (leguminous Kunitz-type inhibitor) family. Monomer and dimer.

Inhibits bovine trypsin but not chymotrypsin. Also inhibits trypsin-like enzymes from midgut of several lepidopteran species and inhibits larval development in those species. Has fungicidal activity against yeast C.buinensis. Has a bacteriostatic effect against E.coli. Is not cytotoxic. This chain is Kunitz-type trypsin inhibitor IVTI, found in Inga vera (River koko).